The chain runs to 215 residues: Probable nicotinate-nucleotide adenylyltransferase (215 aa).

The protein belongs to the NadD family.

The enzyme catalyses nicotinate beta-D-ribonucleotide + ATP + H(+) = deamido-NAD(+) + diphosphate. Its pathway is cofactor biosynthesis; NAD(+) biosynthesis; deamido-NAD(+) from nicotinate D-ribonucleotide: step 1/1. Its function is as follows. Catalyzes the reversible adenylation of nicotinate mononucleotide (NaMN) to nicotinic acid adenine dinucleotide (NaAD). The polypeptide is Probable nicotinate-nucleotide adenylyltransferase (Fervidobacterium nodosum (strain ATCC 35602 / DSM 5306 / Rt17-B1)).